The following is an 82-amino-acid chain: Host transcription reprogramming factor 10 (82 aa).

A signal peptide spans 1 to 19 (MQIFNMVSLVALFALGATA). The segment at 57–81 (WVCHACNKQFTTPAALQKHKDTVVH) adopts a C2H2-type zinc-finger fold.

The protein localises to the secreted. Its subcellular location is the host nucleus. Functionally, probable secreted effector that translocates into the nuclei of host cells to reprogram the expression of targeted genes by binding on effector binding elements in rice. This is Host transcription reprogramming factor 10 from Pyricularia oryzae (strain 70-15 / ATCC MYA-4617 / FGSC 8958) (Rice blast fungus).